We begin with the raw amino-acid sequence, 421 residues long: uncharacterized protein (421 aa).

4 CBS domains span residues 13 to 74 (MTKD…VRSL), 74 to 133 (LMYK…MKDT), 139 to 195 (MTRN…PKKK), and 217 to 274 (MNTP…KGAM).

This is an uncharacterized protein from Methanocaldococcus jannaschii (strain ATCC 43067 / DSM 2661 / JAL-1 / JCM 10045 / NBRC 100440) (Methanococcus jannaschii).